The following is a 254-amino-acid chain: Alcohol dehydrogenase 2 (254 aa).

10 to 33 serves as a coordination point for NAD(+); the sequence is FVAGLGGIGFDTSREIVKSGPKNL. Ser-138 contacts substrate. The Proton acceptor role is filled by Tyr-151.

The protein belongs to the short-chain dehydrogenases/reductases (SDR) family. Homodimer.

The catalysed reaction is a primary alcohol + NAD(+) = an aldehyde + NADH + H(+). It carries out the reaction a secondary alcohol + NAD(+) = a ketone + NADH + H(+). The protein is Alcohol dehydrogenase 2 (Adh2) of Drosophila mulleri (Fruit fly).